A 508-amino-acid polypeptide reads, in one-letter code: Phosphoglycerate kinase A (508 aa).

The (2R)-3-phosphoglycerate site is built by valine 32, aspartate 33, phenylalanine 34, asparagine 35, arginine 48, serine 70, histidine 71, glycine 73, arginine 74, arginine 224, histidine 260, and arginine 261. Residues glycine 306 and alanine 307 each coordinate ADP. Glycine 306 provides a ligand contact to CDP. Residues alanine 307 and lysine 308 each coordinate AMP. Alanine 307 provides a ligand contact to ATP. Residue alanine 307 participates in Mg(2+) binding. Lysine 308 provides a ligand contact to (2R)-3-phosphoglycerate. Glutamate 311 provides a ligand contact to CDP. Position 311 (glutamate 311) interacts with Mg(2+). ADP is bound by residues lysine 312 and glycine 330. Position 312 (lysine 312) interacts with AMP. Lysine 312 contributes to the ATP binding site. Glycine 330 is a CDP binding site. AMP contacts are provided by alanine 331 and alanine 403. ATP-binding residues include alanine 331 and alanine 403. Alanine 403 and asparagine 427 together coordinate ADP. CDP contacts are provided by glycine 428 and phenylalanine 433. ADP is bound by residues phenylalanine 433, glutamate 434, glutamate 466, and serine 467. Glutamate 434 provides a ligand contact to AMP. The ATP site is built by glutamate 434, glutamate 466, and serine 467. Position 466 (glutamate 466) interacts with Mg(2+).

Belongs to the phosphoglycerate kinase family. As to quaternary structure, monomer. Mg(2+) is required as a cofactor.

The catalysed reaction is (2R)-3-phosphoglycerate + ATP = (2R)-3-phospho-glyceroyl phosphate + ADP. It functions in the pathway carbohydrate degradation; glycolysis; pyruvate from D-glyceraldehyde 3-phosphate: step 2/5. The protein is Phosphoglycerate kinase A of Trypanosoma brucei brucei.